The sequence spans 254 residues: Hydroxyacylglutathione hydrolase (254 aa).

Zn(2+)-binding residues include His-54, His-56, Asp-58, His-59, His-111, Asp-130, and His-168.

This sequence belongs to the metallo-beta-lactamase superfamily. Glyoxalase II family. As to quaternary structure, monomer. Zn(2+) is required as a cofactor.

The enzyme catalyses an S-(2-hydroxyacyl)glutathione + H2O = a 2-hydroxy carboxylate + glutathione + H(+). Its pathway is secondary metabolite metabolism; methylglyoxal degradation; (R)-lactate from methylglyoxal: step 2/2. In terms of biological role, thiolesterase that catalyzes the hydrolysis of S-D-lactoyl-glutathione to form glutathione and D-lactic acid. This Legionella pneumophila (strain Paris) protein is Hydroxyacylglutathione hydrolase.